The following is a 265-amino-acid chain: Hydroxyethylthiazole kinase (265 aa).

Position 43 (methionine 43) interacts with substrate. Residues lysine 118 and threonine 165 each contribute to the ATP site. Glycine 192 lines the substrate pocket.

The protein belongs to the Thz kinase family. It depends on Mg(2+) as a cofactor.

It catalyses the reaction 5-(2-hydroxyethyl)-4-methylthiazole + ATP = 4-methyl-5-(2-phosphooxyethyl)-thiazole + ADP + H(+). Its pathway is cofactor biosynthesis; thiamine diphosphate biosynthesis; 4-methyl-5-(2-phosphoethyl)-thiazole from 5-(2-hydroxyethyl)-4-methylthiazole: step 1/1. In terms of biological role, catalyzes the phosphorylation of the hydroxyl group of 4-methyl-5-beta-hydroxyethylthiazole (THZ). In Pyrococcus horikoshii (strain ATCC 700860 / DSM 12428 / JCM 9974 / NBRC 100139 / OT-3), this protein is Hydroxyethylthiazole kinase.